The sequence spans 467 residues: Gamma-aminobutyric acid receptor subunit gamma-3 (467 aa).

A signal peptide spans 1-17 (MAPKLLLLLCLFSGLHA). Residues 18 to 256 (RSRKVEEDEY…FELSRRMGYF (239 aa)) lie on the Extracellular side of the membrane. The N-linked (GlcNAc...) asparagine glycan is linked to Asn110. An intrachain disulfide couples Cys171 to Cys185. Asn228 carries an N-linked (GlcNAc...) asparagine glycan. Residues 257 to 277 (TIQTYIPCILTVVLSWVSFWI) form a helical membrane-spanning segment. Over 278 to 283 (KKDATP) the chain is Cytoplasmic. A helical transmembrane segment spans residues 284-303 (ARTALGITTVLTMTTLSTIA). The Extracellular segment spans residues 304–311 (RKSLPRVS). The chain crosses the membrane as a helical span at residues 312 to 332 (YVTAMDLFVTVCFLFVFAALM). Residues 333–446 (EYATLNYYSS…DILELDSYSR (114 aa)) are Cytoplasmic-facing. A helical membrane pass occupies residues 447–467 (VFFPTSFLLFNLVYWVGYLYL).

Belongs to the ligand-gated ion channel (TC 1.A.9) family. Gamma-aminobutyric acid receptor (TC 1.A.9.5) subfamily. GABRG3 sub-subfamily. As to quaternary structure, heteropentamer, formed by a combination of alpha (GABRA1-6), beta (GABRB1-3), gamma (GABRG1-3), delta (GABRD), epsilon (GABRE), rho (GABRR1-3), pi (GABRP) and theta (GABRQ) chains, each subunit exhibiting distinct physiological and pharmacological properties. May be palmitoylated. As to expression, expressed in brain.

It is found in the postsynaptic cell membrane. The protein localises to the cell membrane. The catalysed reaction is chloride(in) = chloride(out). In terms of biological role, gamma subunit of the heteropentameric ligand-gated chloride channel gated by gamma-aminobutyric acid (GABA), a major inhibitory neurotransmitter in the brain. GABA-gated chloride channels, also named GABA(A) receptors (GABAAR), consist of five subunits arranged around a central pore and contain GABA active binding site(s) located at the alpha and beta subunit interface(s). When activated by GABA, GABAARs selectively allow the flow of chloride across the cell membrane down their electrochemical gradient. The polypeptide is Gamma-aminobutyric acid receptor subunit gamma-3 (Homo sapiens (Human)).